The following is a 304-amino-acid chain: bZIP transcription factor 50 (304 aa).

Over 1 to 222 (MDVEFFADLD…MQESAVLTET (222 aa)) the chain is Cytoplasmic. 2 disordered regions span residues 26 to 60 (GSGV…SREA) and 94 to 163 (GEEE…ERKK). Positions 45–59 (SPESVSSRRPSPSRE) are enriched in low complexity. Residues 127-139 (EKEDVEAEVDGDD) show a composition bias toward acidic residues. A bZIP domain is found at 141-203 (MSKKKRRQMR…NMALRQSLLK (63 aa)). Residues 143-167 (KKKRRQMRNRDSAMKSRERKKMYVK) are basic motif. Basic and acidic residues predominate over residues 150–163 (RNRDSAMKSRERKK). A leucine-zipper region spans residues 169 to 183 (LETKSKYLEAECRRL). A helical transmembrane segment spans residues 223–243 (LPLVSLLWLVSIVCLLPVPGL). The Lumenal portion of the chain corresponds to 244–304 (PNRNPVARSS…GPFRLAAAAC (61 aa)).

This sequence belongs to the bZIP family.

It is found in the endoplasmic reticulum membrane. The protein localises to the nucleus. Its activity is regulated as follows. Transcriptionally activated by IRE1 in response to endoplasmic reticulum (ER) stress. IRE1 cleaves a 20-bp fragment causing a frameshift of the mRNA transcript, leading to a nuclear isoform of the BZIP50 activator. Its function is as follows. Transcription factor involved in endoplasmic reticulum (ER) stress response. Acts downstream of the ER stress sensors IRE1, BZIP39 and BZIP60 to activate BiP chaperone genes. The polypeptide is bZIP transcription factor 50 (Oryza sativa subsp. japonica (Rice)).